Reading from the N-terminus, the 132-residue chain is Small ribosomal subunit protein uS8 (132 aa).

Belongs to the universal ribosomal protein uS8 family. In terms of assembly, part of the 30S ribosomal subunit. Contacts proteins S5 and S12.

In terms of biological role, one of the primary rRNA binding proteins, it binds directly to 16S rRNA central domain where it helps coordinate assembly of the platform of the 30S subunit. This is Small ribosomal subunit protein uS8 from Desulfitobacterium hafniense (strain DSM 10664 / DCB-2).